Consider the following 591-residue polypeptide: Indole-3-acetic acid-amido synthetase GH3.10 (591 aa).

This sequence belongs to the IAA-amido conjugating enzyme family. In terms of tissue distribution, expressed in cotyledons and hypocotyls.

Functionally, catalyzes the synthesis of indole-3-acetic acid (IAA)-amino acid conjugates, providing a mechanism for the plant to cope with the presence of excess auxin. Involved in red light-specific hypocotyl elongation. May act downstream of a red light signal transduction and determine the degree of hypocotyl elongation. This Arabidopsis thaliana (Mouse-ear cress) protein is Indole-3-acetic acid-amido synthetase GH3.10.